Here is a 1671-residue protein sequence, read N- to C-terminus: Fatty acid synthase alpha subunit aflA (1671 aa).

The tract at residues 40-60 is disordered; sequence ITEEAPTEQPPLSTPPSLPQT. Over residues 47 to 58 the composition is skewed to pro residues; the sequence is EQPPLSTPPSLP. Residues 75–153 enclose the Carrier domain; sequence DVALSRVQIV…DANPTVQLGK (79 aa). O-(pantetheine 4'-phosphoryl)serine is present on S113. The interval 492–729 is ketoreductase (KR) domain; it reads GKTFLVTGAG…AMLLTPDFVA (238 aa). The region spanning 926–1428 is the Ketosynthase family 3 (KS3) domain; the sequence is MEVLQEVAVE…QKGGQVVGVA (503 aa). The For beta-ketoacyl synthase activity role is filled by C1113. A compositionally biased stretch (low complexity) spans 1244–1270; sequence SMISVTSRPSSRSSTSSEVSDKSSLTS. The interval 1244–1288 is disordered; sequence SMISVTSRPSSRSSTSSEVSDKSSLTSITSISNPAPRAQRARSTT. Catalysis depends on for beta-ketoacyl synthase activity residues H1313 and H1354. A disordered region spans residues 1497–1521; the sequence is PSTGQYRFRSDATPALDDDALPPPG. D1552 serves as a coordination point for Mg(2+). Acetyl-CoA-binding positions include 1552–1554, 1598–1608, 1622–1625, and 1652–1654; these read DLV, EAVFKCLQTHS, HGGN, and ISY. Mg(2+) is bound at residue S1653.

The protein belongs to the thiolase-like superfamily. Fungal fatty acid synthetase subunit alpha family. As to quaternary structure, [Alpha(6)beta(6)] hexamers of two multifunctional subunits (alpha and beta). In terms of processing, 4'-phosphopantetheine is transferred from CoA to a specific serine of the acyl carrier domain by the C-terminal PPT domain. This modification is essential for activity because fatty acids are bound in thioester linkage to the sulfhydryl of the prosthetic group.

It catalyses the reaction acetyl-CoA + n malonyl-CoA + 2n NADPH + 4n H(+) = a long-chain-acyl-CoA + n CoA + n CO2 + 2n NADP(+).. The enzyme catalyses a fatty acyl-[ACP] + malonyl-[ACP] + H(+) = a 3-oxoacyl-[ACP] + holo-[ACP] + CO2. It carries out the reaction a (3R)-hydroxyacyl-[ACP] + NADP(+) = a 3-oxoacyl-[ACP] + NADPH + H(+). It functions in the pathway mycotoxin biosynthesis; aflatoxin biosynthesis. Functionally, fatty acid synthase alpha subunit; part of the gene cluster that mediates the biosynthesis of aflatoxins, a group of polyketide-derived furanocoumarins, and part of the most toxic and carcinogenic compounds among the known mycotoxins. The four major aflatoxins produced by A.parasiticus are aflatoxin B1 (AFB1), aflatoxin B2 (AFB2), aflatoxin G1 (AFG1) and aflatoxin G2 (AFG2). Within the aflatoxin pathway, the fungal fatty acid synthase aflA/aflB provides the hexanoyl starter unit to the acyl-carrier protein (ACP) domain of the norsolorinic acid synthase to allow the first step of the pathway. The biosynthesis of aflatoxins begins with the norsolorinic acid synthase aflC that combines a hexanoyl starter unit produced by the fatty acid synthase aflA/aflB and 7 malonyl-CoA extender units to synthesize the precursor NOR. The second step is the conversion of NOR to averantin (AVN) and requires the norsolorinic acid ketoreductase aflD, which catalyzes the dehydration of norsolorinic acid to form (1'S)-averantin. The norsolorinic acid reductases aflE and aflF may also play a role in the conversion of NOR to AVN. The cytochrome P450 monooxygenase aflG then catalyzes the hydroxylation of AVN to 5'hydroxyaverantin (HAVN). The next step is performed by the 5'-hydroxyaverantin dehydrogenase aflH that transforms HAVN to 5'-oxoaverantin (OAVN) which is further converted to averufin (AVF) by aflK that plays a dual role in the pathway, as a 5'-oxoaverantin cyclase that mediates conversion of 5'-oxoaverantin, as well as a versicolorin B synthase in a later step in the pathway. The averufin oxidase aflI catalyzes the conversion of AVF to versiconal hemiacetal acetate (VHA). VHA is then the substrate for the versiconal hemiacetal acetate esterase aflJ to yield versiconal (VAL). Versicolorin B synthase aflK then converts VAL to versicolorin B (VERB) by closing the bisfuran ring of aflatoxin which is required for DNA-binding, thus giving to aflatoxin its activity as a mutagen. Then, the activity of the versicolorin B desaturase aflL leads to versicolorin A (VERA). A branch point starts from VERB since it can also be converted to dihydrodemethylsterigmatocystin (DMDHST), probably also by aflL, VERA being a precursor for aflatoxins B1 and G1, and DMDHST for aflatoxins B2 and G2. Next, the versicolorin reductase aflM and the cytochrome P450 monooxygenase aflN are involved in conversion of VERA to demethylsterigmatocystin (DMST). AflX and aflY seem also involved in this step, through probable aflX-mediated epoxide ring-opening step following versicolorin A oxidation and aflY-mediated Baeyer-Villiger oxidation required for the formation of the xanthone ring. The methyltransferase aflO then leads to the modification of DMST to sterigmatocystin (ST), and of DMDHST to dihydrosterigmatocystin (DHST). Both ST and DHST are then substrates of the O-methyltransferase aflP to yield O-methylsterigmatocystin (OMST) and dihydro-O-methylsterigmatocystin (DHOMST), respectively. Finally OMST is converted to aflatoxins B1 and G1, and DHOMST to aflatoxins B2 and G2, via the action of several enzymes including O-methylsterigmatocystin oxidoreductase aflQ, the cytochrome P450 monooxygenase aflU, but also the NADH-dependent flavin oxidoreductase nadA which is specifically required for the synthesis of AFG1. The protein is Fatty acid synthase alpha subunit aflA of Aspergillus parasiticus (strain ATCC 56775 / NRRL 5862 / SRRC 143 / SU-1).